A 138-amino-acid polypeptide reads, in one-letter code: Large ribosomal subunit protein uL16 (138 aa).

Over residues 1–13 the composition is skewed to basic residues; sequence MLQPARRKFRKEQ. The segment at 1-22 is disordered; that stretch reads MLQPARRKFRKEQKGRNTGLAT.

The protein belongs to the universal ribosomal protein uL16 family. As to quaternary structure, part of the 50S ribosomal subunit.

Its function is as follows. Binds 23S rRNA and is also seen to make contacts with the A and possibly P site tRNAs. This Thiobacillus denitrificans (strain ATCC 25259 / T1) protein is Large ribosomal subunit protein uL16.